The sequence spans 362 residues: Ribosome-binding ATPase YchF (362 aa).

In terms of domain architecture, OBG-type G spans Phe3 to Met255. Asn12–Thr17 is a binding site for ATP. Residues Ser16 and Thr36 each coordinate Mg(2+). The 84-residue stretch at Asn277–Phe360 folds into the TGS domain.

The protein belongs to the TRAFAC class OBG-HflX-like GTPase superfamily. OBG GTPase family. YchF/OLA1 subfamily. Mg(2+) is required as a cofactor.

In terms of biological role, ATPase that binds to both the 70S ribosome and the 50S ribosomal subunit in a nucleotide-independent manner. The protein is Ribosome-binding ATPase YchF of Buchnera aphidicola subsp. Schizaphis graminum (strain Sg).